A 130-amino-acid chain; its full sequence is Small ribosomal subunit protein uS11c (130 aa).

This sequence belongs to the universal ribosomal protein uS11 family. As to quaternary structure, part of the 30S ribosomal subunit.

It is found in the plastid. Its subcellular location is the chloroplast. This Anthoceros angustus (Hornwort) protein is Small ribosomal subunit protein uS11c.